We begin with the raw amino-acid sequence, 149 residues long: 3-dehydroquinate dehydratase (149 aa).

Catalysis depends on Y26, which acts as the Proton acceptor. Substrate contacts are provided by N78, H84, and D91. H104 serves as the catalytic Proton donor. Residues 105–106 (LS) and R115 each bind substrate.

The protein belongs to the type-II 3-dehydroquinase family. As to quaternary structure, homododecamer.

The catalysed reaction is 3-dehydroquinate = 3-dehydroshikimate + H2O. Its pathway is metabolic intermediate biosynthesis; chorismate biosynthesis; chorismate from D-erythrose 4-phosphate and phosphoenolpyruvate: step 3/7. Functionally, catalyzes a trans-dehydration via an enolate intermediate. This Polynucleobacter asymbioticus (strain DSM 18221 / CIP 109841 / QLW-P1DMWA-1) (Polynucleobacter necessarius subsp. asymbioticus) protein is 3-dehydroquinate dehydratase.